The primary structure comprises 896 residues: Alanine--tRNA ligase (896 aa).

Zn(2+) contacts are provided by H599, H603, C707, and H711.

It belongs to the class-II aminoacyl-tRNA synthetase family. Zn(2+) serves as cofactor.

The protein localises to the cytoplasm. The catalysed reaction is tRNA(Ala) + L-alanine + ATP = L-alanyl-tRNA(Ala) + AMP + diphosphate. Functionally, catalyzes the attachment of alanine to tRNA(Ala) in a two-step reaction: alanine is first activated by ATP to form Ala-AMP and then transferred to the acceptor end of tRNA(Ala). Also edits incorrectly charged Ser-tRNA(Ala) and Gly-tRNA(Ala) via its editing domain. This is Alanine--tRNA ligase from Pyrobaculum calidifontis (strain DSM 21063 / JCM 11548 / VA1).